We begin with the raw amino-acid sequence, 368 residues long: Multifunctional CCA protein (368 aa).

G8 and R11 together coordinate ATP. CTP contacts are provided by G8 and R11. Mg(2+) contacts are provided by D21 and D23. 3 residues coordinate ATP: R91, R137, and R140. R91, R137, and R140 together coordinate CTP.

Belongs to the tRNA nucleotidyltransferase/poly(A) polymerase family. Bacterial CCA-adding enzyme type 1 subfamily. In terms of assembly, monomer. Can also form homodimers and oligomers. Mg(2+) is required as a cofactor. It depends on Ni(2+) as a cofactor.

It catalyses the reaction a tRNA precursor + 2 CTP + ATP = a tRNA with a 3' CCA end + 3 diphosphate. It carries out the reaction a tRNA with a 3' CCA end + 2 CTP + ATP = a tRNA with a 3' CCACCA end + 3 diphosphate. Its function is as follows. Catalyzes the addition and repair of the essential 3'-terminal CCA sequence in tRNAs without using a nucleic acid template. Adds these three nucleotides in the order of C, C, and A to the tRNA nucleotide-73, using CTP and ATP as substrates and producing inorganic pyrophosphate. tRNA 3'-terminal CCA addition is required both for tRNA processing and repair. Also involved in tRNA surveillance by mediating tandem CCA addition to generate a CCACCA at the 3' terminus of unstable tRNAs. While stable tRNAs receive only 3'-terminal CCA, unstable tRNAs are marked with CCACCA and rapidly degraded. In Pseudomonas putida (strain ATCC 47054 / DSM 6125 / CFBP 8728 / NCIMB 11950 / KT2440), this protein is Multifunctional CCA protein.